The chain runs to 133 residues: Helix-loop-helix protein 1 (133 aa).

Residues 1–78 (MMLNSDTMEL…RRRATAKYRT (78 aa)) form a disordered region. Residues 25 to 39 (DCGGGPGPDGAGSGD) show a composition bias toward gly residues. A compositionally biased stretch (basic and acidic residues) spans 52 to 65 (ESGRKDLQHLSREE). Over residues 66–78 (RRRRRRATAKYRT) the composition is skewed to basic residues. Residues 75–127 (KYRTAHATRERIRVEAFNLAFAELRKLLPTLPPDKKLSKIEILRLAICYISYL) form the bHLH domain.

Efficient DNA binding requires dimerization with another bHLH protein.

The protein resides in the nucleus. Its function is as follows. May serve as DNA-binding protein and may be involved in the control of cell-type determination, possibly within the developing nervous system. The chain is Helix-loop-helix protein 1 (Nhlh1) from Mus musculus (Mouse).